Reading from the N-terminus, the 278-residue chain is Sulfur carrier protein FdhD (278 aa).

Cys117 (cysteine persulfide intermediate) is an active-site residue.

It belongs to the FdhD family.

It localises to the cytoplasm. Functionally, required for formate dehydrogenase (FDH) activity. Acts as a sulfur carrier protein that transfers sulfur from IscS to the molybdenum cofactor prior to its insertion into FDH. The chain is Sulfur carrier protein FdhD from Variovorax paradoxus (strain S110).